Consider the following 735-residue polypeptide: Alpha-adducin (735 aa).

The residue at position 1 (methionine 1) is an N-acetylmethionine. Residues 1-11 (MNGDTRAAVVT) are compositionally biased toward low complexity. Positions 1–21 (MNGDTRAAVVTSPPPTTAPHK) are disordered. Serine 12, serine 59, and serine 64 each carry phosphoserine. At threonine 331 the chain carries Phosphothreonine. Phosphoserine occurs at positions 334, 353, and 355. At threonine 358 the chain carries Phosphothreonine. Phosphoserine is present on residues serine 364, serine 366, serine 408, and serine 427. Disordered stretches follow at residues 418 to 487 (GHSF…AVPN) and 576 to 735 (RREV…KSDS). Threonine 429 carries the phosphothreonine modification. Phosphoserine is present on residues serine 431 and serine 436. The segment covering 440–455 (QQREKTRWLHSGRGDD) has biased composition (basic and acidic residues). At threonine 445 the chain carries Phosphothreonine; by ROCK2. Residues serine 464 and serine 465 each carry the phosphoserine modification. Threonine 480 is subject to Phosphothreonine; by ROCK2. Serine 481 bears the Phosphoserine; by PKA mark. Residues 576–601 (RREVERKQKGSEENLDETREQKEKSP) are compositionally biased toward basic and acidic residues. Phosphoserine is present on residues serine 586, serine 600, and serine 605. Position 610 is a phosphothreonine (threonine 610). Position 613 is a phosphoserine (serine 613). At threonine 614 the chain carries Phosphothreonine. Over residues 698-712 (GSPMDPGSDGSPGKS) the composition is skewed to low complexity. A phosphoserine mark is found at serine 705, serine 708, and serine 712. A compositionally biased stretch (basic residues) spans 713 to 735 (PSKKKKKFRTPSFLKKSKKKSDS). Serine 714 is subject to Phosphoserine; by PKC. An interaction with calmodulin region spans residues 715-732 (KKKKKFRTPSFLKKSKKK). Phosphoserine; by PKA and PKC is present on serine 724.

This sequence belongs to the aldolase class II family. Adducin subfamily. As to quaternary structure, heterodimer of an alpha and a beta subunit or an alpha and a gamma subunit.

It is found in the cytoplasm. Its subcellular location is the cytoskeleton. The protein localises to the cell membrane. Its function is as follows. Membrane-cytoskeleton-associated protein that promotes the assembly of the spectrin-actin network. Binds to calmodulin. This Mus musculus (Mouse) protein is Alpha-adducin (Add1).